The primary structure comprises 218 residues: Phosphoglycolate phosphatase (218 aa).

Asp7 (nucleophile) is an active-site residue. Residues Asp7, Asp9, and Asp167 each coordinate Mg(2+).

It belongs to the HAD-like hydrolase superfamily. CbbY/CbbZ/Gph/YieH family. Mg(2+) is required as a cofactor.

It catalyses the reaction 2-phosphoglycolate + H2O = glycolate + phosphate. It participates in organic acid metabolism; glycolate biosynthesis; glycolate from 2-phosphoglycolate: step 1/1. Specifically catalyzes the dephosphorylation of 2-phosphoglycolate. Is involved in the dissimilation of the intracellular 2-phosphoglycolate formed during the DNA repair of 3'-phosphoglycolate ends, a major class of DNA lesions induced by oxidative stress. This chain is Phosphoglycolate phosphatase, found in Cereibacter sphaeroides (strain ATCC 17029 / ATH 2.4.9) (Rhodobacter sphaeroides).